A 342-amino-acid chain; its full sequence is Phenylalanine--tRNA ligase alpha subunit (342 aa).

E255 contacts Mg(2+).

The protein belongs to the class-II aminoacyl-tRNA synthetase family. Phe-tRNA synthetase alpha subunit type 1 subfamily. In terms of assembly, tetramer of two alpha and two beta subunits. Mg(2+) is required as a cofactor.

The protein resides in the cytoplasm. It carries out the reaction tRNA(Phe) + L-phenylalanine + ATP = L-phenylalanyl-tRNA(Phe) + AMP + diphosphate + H(+). This Pelodictyon phaeoclathratiforme (strain DSM 5477 / BU-1) protein is Phenylalanine--tRNA ligase alpha subunit.